A 541-amino-acid polypeptide reads, in one-letter code: Arginine--tRNA ligase (541 aa).

Residues 119-129 (ANPTGPLHIGH) carry the 'HIGH' region motif.

The protein belongs to the class-I aminoacyl-tRNA synthetase family. In terms of assembly, monomer.

The protein resides in the cytoplasm. It catalyses the reaction tRNA(Arg) + L-arginine + ATP = L-arginyl-tRNA(Arg) + AMP + diphosphate. The protein is Arginine--tRNA ligase of Helicobacter pylori (strain G27).